The chain runs to 178 residues: uncharacterized protein (178 aa).

The tract at residues glycine 64–threonine 103 is disordered. The span at threonine 73–glutamate 84 shows a compositional bias: basic and acidic residues.

This is an uncharacterized protein from Acidianus sp. F28 (AFV-2).